We begin with the raw amino-acid sequence, 863 residues long: Leucine--tRNA ligase (863 aa).

The 'HIGH' region signature appears at 42–53 (PYPSGSGLHVGH). The short motif at 635-639 (KMSKS) is the 'KMSKS' region element. Residue K638 participates in ATP binding.

It belongs to the class-I aminoacyl-tRNA synthetase family.

Its subcellular location is the cytoplasm. It carries out the reaction tRNA(Leu) + L-leucine + ATP = L-leucyl-tRNA(Leu) + AMP + diphosphate. The protein is Leucine--tRNA ligase of Salinibacter ruber (strain DSM 13855 / M31).